The sequence spans 160 residues: Small ribosomal subunit protein uS7 (160 aa).

Belongs to the universal ribosomal protein uS7 family. As to quaternary structure, part of the 30S ribosomal subunit. Contacts proteins S9 and S11.

Functionally, one of the primary rRNA binding proteins, it binds directly to 16S rRNA where it nucleates assembly of the head domain of the 30S subunit. Is located at the subunit interface close to the decoding center, probably blocks exit of the E-site tRNA. The chain is Small ribosomal subunit protein uS7 from Rickettsia canadensis (strain McKiel).